The primary structure comprises 324 residues: Delta-aminolevulinic acid dehydratase (324 aa).

Zn(2+)-binding residues include Cys118, Cys120, and Cys128. Lys195 acts as the Schiff-base intermediate with substrate in catalysis. 5-aminolevulinate is bound by residues Arg205 and Arg217. Residue Glu233 participates in Mg(2+) binding. Residue Lys248 is the Schiff-base intermediate with substrate of the active site. The 5-aminolevulinate site is built by Ser274 and Tyr313.

Belongs to the ALAD family. Homooctamer. Requires Zn(2+) as cofactor.

The catalysed reaction is 2 5-aminolevulinate = porphobilinogen + 2 H2O + H(+). The protein operates within porphyrin-containing compound metabolism; protoporphyrin-IX biosynthesis; coproporphyrinogen-III from 5-aminolevulinate: step 1/4. Its function is as follows. Catalyzes an early step in the biosynthesis of tetrapyrroles. Binds two molecules of 5-aminolevulinate per subunit, each at a distinct site, and catalyzes their condensation to form porphobilinogen. This is Delta-aminolevulinic acid dehydratase (hemB) from Staphylococcus epidermidis (strain ATCC 12228 / FDA PCI 1200).